The following is a 283-amino-acid chain: Putative cytochrome b-c1 complex subunit Rieske-like protein 1 (283 aa).

A helical transmembrane segment spans residues 116–149 (TEARKGFSYLVTGVTTVGVAYAAKNAVTQFVSSM). Residues 196-281 (EAAVELSQLR…YEFTSDDMVI (86 aa)) enclose the Rieske domain. [2Fe-2S] cluster is bound by residues C226, H228, C245, and H248. C231 and C247 form a disulfide bridge.

The protein belongs to the Rieske iron-sulfur protein family. It depends on [2Fe-2S] cluster as a cofactor.

The protein localises to the membrane. The sequence is that of Putative cytochrome b-c1 complex subunit Rieske-like protein 1 (UQCRFS1P1) from Homo sapiens (Human).